The sequence spans 189 residues: Probable nicotinate-nucleotide adenylyltransferase (189 aa).

This sequence belongs to the NadD family.

The catalysed reaction is nicotinate beta-D-ribonucleotide + ATP + H(+) = deamido-NAD(+) + diphosphate. Its pathway is cofactor biosynthesis; NAD(+) biosynthesis; deamido-NAD(+) from nicotinate D-ribonucleotide: step 1/1. In terms of biological role, catalyzes the reversible adenylation of nicotinate mononucleotide (NaMN) to nicotinic acid adenine dinucleotide (NaAD). The polypeptide is Probable nicotinate-nucleotide adenylyltransferase (Cereibacter sphaeroides (strain ATCC 17023 / DSM 158 / JCM 6121 / CCUG 31486 / LMG 2827 / NBRC 12203 / NCIMB 8253 / ATH 2.4.1.) (Rhodobacter sphaeroides)).